The sequence spans 639 residues: Protein sly1 (639 aa).

Belongs to the STXBP/unc-18/SEC1 family.

It localises to the cytoplasm. The sequence is that of Protein sly1 (sly1) from Schizosaccharomyces pombe (strain 972 / ATCC 24843) (Fission yeast).